Here is a 180-residue protein sequence, read N- to C-terminus: MNCSSTAVLLETVNFAAEKHRNQRHKDPEGTPYINHPIGVARILSHEGEITDVEVIQAALLHDTVEDTDTTFEELESVFGATVARIVQGVTDDKSLPKAERERQQVEHAPHCSHQAKLVKLADKLYNLRDLNRCTPEGWSAQRVQEYFEWASQVVKGLRGTNAAIEEKLQQLFLERGVKL.

Positions 33–128 (YINHPIGVAR…VKLADKLYNL (96 aa)) constitute an HD domain. Residues His-36, His-62, and Asp-63 each coordinate Mn(2+). Residues Glu-66 and Asp-67 each act as nucleophile in the active site. Asp-123 contributes to the Mn(2+) binding site.

The protein belongs to the MESH1 family. Requires Mn(2+) as cofactor.

The catalysed reaction is guanosine 3',5'-bis(diphosphate) + H2O = GDP + diphosphate + H(+). PpGpp hydrolyzing enzyme involved in starvation response. In Danio rerio (Zebrafish), this protein is Guanosine-3',5'-bis(diphosphate) 3'-pyrophosphohydrolase MESH1 (hddc3).